Reading from the N-terminus, the 500-residue chain is ATP synthase subunit alpha (500 aa).

Residue 167 to 174 (GDRQTGKT) coordinates ATP.

The protein belongs to the ATPase alpha/beta chains family. In terms of assembly, F-type ATPases have 2 components, CF(1) - the catalytic core - and CF(0) - the membrane proton channel. CF(1) has five subunits: alpha(3), beta(3), gamma(1), delta(1), epsilon(1). CF(0) has three main subunits: a(1), b(2) and c(9-12). The alpha and beta chains form an alternating ring which encloses part of the gamma chain. CF(1) is attached to CF(0) by a central stalk formed by the gamma and epsilon chains, while a peripheral stalk is formed by the delta and b chains.

It localises to the cell inner membrane. The enzyme catalyses ATP + H2O + 4 H(+)(in) = ADP + phosphate + 5 H(+)(out). Functionally, produces ATP from ADP in the presence of a proton gradient across the membrane. The alpha chain is a regulatory subunit. The chain is ATP synthase subunit alpha from Wolinella succinogenes (strain ATCC 29543 / DSM 1740 / CCUG 13145 / JCM 31913 / LMG 7466 / NCTC 11488 / FDC 602W) (Vibrio succinogenes).